Here is a 472-residue protein sequence, read N- to C-terminus: Mitochondrial substrate carrier family protein C (472 aa).

Residues 1–189 (MVLNENDKEF…ASSLRNTITY (189 aa)) lie on the Mitochondrial intermembrane side of the membrane. EF-hand domains lie at 6 to 41 (NDKE…LRIP), 42 to 70 (SSEK…FEDF), 73 to 108 (ENIK…LNIP), and 110 to 145 (YSEQ…LPNS). The Ca(2+) site is built by Asp-19, Asp-21, Asn-23, Lys-25, Glu-30, Asp-55, Asp-57, Asp-59, Ser-61, Glu-66, Asp-86, Asn-88, Ser-90, Thr-92, Glu-97, Asp-123, Asn-125, Asp-127, Gln-129, and Glu-134. Solcar repeat units follow at residues 184–268 (RNTI…VKKL), 276–362 (LTSA…LKHK), and 375–461 (GQLL…FKKA). Residues 190-207 (MLAGSVAGFASRTSTAPL) traverse the membrane as a helical segment. At 208–242 (ERVKIMCQLNHGKPISLISAFKACYKDGGIKGFFR) the chain is on the mitochondrial matrix side. Residues 243–263 (GNLANIIKVSPESAVKFGTYE) traverse the membrane as a helical segment. The Mitochondrial intermembrane portion of the chain corresponds to 264-281 (YVKKLFAENDCELTSAQR). Residues 282–302 (FISGSVAGVVSHTTLFPLEVV) form a helical membrane-spanning segment. At 303-330 (RLRLSAEIAGTYNGIFDCFKKIAISEKS) the chain is on the mitochondrial matrix side. A helical transmembrane segment spans residues 331-351 (IRPFYRGLGASITATIPHSGV). Residues 352-377 (NMMVYEFLKHKVIKMTGNEFPTAGQL) lie on the Mitochondrial intermembrane side of the membrane. The chain crosses the membrane as a helical span at residues 378 to 398 (LVCASTSSVCGQLVGYPFHVV). Residues 399–441 (KSRLITQGSSVNQEKYTGLFDGLTKIIKKEGPIGLYKGIVPSF) lie on the Mitochondrial matrix side of the membrane. Residues 442-462 (MKSIPSHSITFIVYEGFKKAF) traverse the membrane as a helical segment. The Mitochondrial intermembrane segment spans residues 463–472 (DVNLKEKKHH).

This sequence belongs to the mitochondrial carrier (TC 2.A.29) family.

The protein localises to the mitochondrion inner membrane. Calcium-dependent mitochondrial solute carrier. Mitochondrial solute carriers shuttle metabolites, nucleotides, and cofactors through the mitochondrial inner membrane. The sequence is that of Mitochondrial substrate carrier family protein C (mcfC) from Dictyostelium discoideum (Social amoeba).